We begin with the raw amino-acid sequence, 158 residues long: Cyclic pyranopterin monophosphate synthase (158 aa).

Residues 76–78 (MCH) and 114–115 (ME) each bind substrate. Aspartate 129 is an active-site residue.

Belongs to the MoaC family. As to quaternary structure, homohexamer; trimer of dimers.

It catalyses the reaction (8S)-3',8-cyclo-7,8-dihydroguanosine 5'-triphosphate = cyclic pyranopterin phosphate + diphosphate. It functions in the pathway cofactor biosynthesis; molybdopterin biosynthesis. Catalyzes the conversion of (8S)-3',8-cyclo-7,8-dihydroguanosine 5'-triphosphate to cyclic pyranopterin monophosphate (cPMP). The polypeptide is Cyclic pyranopterin monophosphate synthase (Clostridium perfringens (strain SM101 / Type A)).